A 329-amino-acid polypeptide reads, in one-letter code: Interferon regulatory factor 1 (329 aa).

Positions 5–113 form a DNA-binding region, IRF tryptophan pentad repeat; it reads RMRMRPWLEM…SAVRVYRMLP (109 aa). Lysine 78 is subject to N6-acetyllysine. Residues 93–166 are disordered; it reads EVKDQSRNKG…LPDDHSSYTT (74 aa). Positions 146 to 166 are enriched in polar residues; the sequence is DTFSDGLSSSTLPDDHSSYTT. Residues lysine 276 and lysine 300 each participate in a glycyl lysine isopeptide (Lys-Gly) (interchain with G-Cter in SUMO) cross-link.

Belongs to the IRF family. As to quaternary structure, monomer. Homodimer. Interacts with EP300. Interacts with MYD88. Interacts with PIAS3. Interacts with SPOP. Post-translationally, phosphorylated by CK2 and this positively regulates its activity. In terms of processing, ubiquitinated in a SPOP-depedent manner. Sumoylation represses the transcriptional activity and displays enhanced resistance to protein degradation. Sumoylated by UBE2I/UBC9 and SUMO1. Inactivates the tumor suppressor activity. Elevated levels in tumor cells. Major site is Lys-276. Sumoylation is enhanced by PIAS3. Desumoylated by SENP1 in tumor cells and appears to compete with ubiquitination on C-terminal sites. Ubiquitinated. Appears to compete with sumoylation on C-terminal sites.

It localises to the nucleus. Its subcellular location is the cytoplasm. Activated by MYD88. Transcriptional regulator which displays a remarkable functional diversity in the regulation of cellular responses. Regulates transcription of IFN and IFN-inducible genes, host response to viral and bacterial infections, regulation of many genes expressed during hematopoiesis, inflammation, immune responses and cell proliferation and differentiation, regulation of the cell cycle and induction of growth arrest and programmed cell death following DNA damage. Stimulates both innate and acquired immune responses through the activation of specific target genes and can act as a transcriptional activator and repressor regulating target genes by binding to an interferon-stimulated response element (ISRE) in their promoters. Has an essentail role in IFNG-dependent immunity to mycobacteria. Binds to a consensus sequence in gene promoters. Its target genes for transcriptional activation activity are: genes involved in anti-viral response, such as IFN-alpha/beta, RIGI, TNFSF10/TRAIL, ZBP1, OAS1/2, PIAS1/GBP, EIF2AK2/PKR and RSAD2/viperin; antibacterial response, such as GBP2, GBP5, IRGB10 and NOS2/INOS; anti-proliferative response, such as p53/TP53, LOX and CDKN1A; apoptosis, such as BBC3/PUMA, CASP1, CASP7 and CASP8; immune response, such as IL7, IL12A/B and IL15, PTGS2/COX2 and CYBB; DNA damage responses and DNA repair, such as POLQ/POLH; MHC class I expression, such as TAP1, PSMB9/LMP2, PSME1/PA28A, PSME2/PA28B and B2M and MHC class II expression, such as CIITA; metabolic enzymes, such as ACOD1/IRG1. Represses genes involved in anti-proliferative response, such as BIRC5/survivin, CCNB1, CCNE1, CDK1, CDK2 and CDK4 and in immune response, such as FOXP3, IL4, ANXA2 and TLR4. Stimulates p53/TP53-dependent transcription through enhanced recruitment of EP300 leading to increased acetylation of p53/TP53. Plays an important role in immune response directly affecting NK maturation and activity, macrophage production of IL12, Th1 development and maturation of CD8+ T-cells. Also implicated in the differentiation and maturation of dendritic cells and in the suppression of regulatory T (Treg) cells development. Acts as a tumor suppressor and plays a role not only in antagonism of tumor cell growth but also in stimulating an immune response against tumor cells. The polypeptide is Interferon regulatory factor 1 (Irf1) (Mus musculus (Mouse)).